A 516-amino-acid chain; its full sequence is Golgi-associated kinase 1B (516 aa).

Over Met1–Asn37 the chain is Cytoplasmic. The helical; Signal-anchor for type II membrane protein transmembrane segment at Leu38–Val55 threads the bilayer. Residues Gly56–Glu516 are Extracellular-facing. The N-linked (GlcNAc...) asparagine glycan is linked to Asn286.

The protein belongs to the GASK family.

It localises to the golgi apparatus membrane. The polypeptide is Golgi-associated kinase 1B (Rattus norvegicus (Rat)).